A 420-amino-acid chain; its full sequence is Tyrosine--tRNA ligase (420 aa).

L-tyrosine is bound at residue Y38. Positions 43-52 match the 'HIGH' region motif; the sequence is PTGDSLHIGH. Residues Y169 and Q173 each contribute to the L-tyrosine site. A 'KMSKS' region motif is present at residues 231–235; that stretch reads KFGKS. K234 contacts ATP. An S4 RNA-binding domain is found at 353-419; that stretch reads KNIVDFLVDT…GKRKYTLVTI (67 aa).

Belongs to the class-I aminoacyl-tRNA synthetase family. TyrS type 1 subfamily. As to quaternary structure, homodimer.

The protein resides in the cytoplasm. It carries out the reaction tRNA(Tyr) + L-tyrosine + ATP = L-tyrosyl-tRNA(Tyr) + AMP + diphosphate + H(+). Catalyzes the attachment of tyrosine to tRNA(Tyr) in a two-step reaction: tyrosine is first activated by ATP to form Tyr-AMP and then transferred to the acceptor end of tRNA(Tyr). The polypeptide is Tyrosine--tRNA ligase (Lactobacillus acidophilus (strain ATCC 700396 / NCK56 / N2 / NCFM)).